We begin with the raw amino-acid sequence, 461 residues long: Polycomb group protein FIE1 (461 aa).

A compositionally biased stretch (basic residues) spans M1 to S11. Positions M1–P56 are disordered. Residues T18–G37 show a composition bias toward polar residues. Positions K38 to P47 are enriched in basic and acidic residues. WD repeat units follow at residues D143–S186, G189–V229, G235–E275, V301–G338, P351–I391, and E398–S437. Residues E429–A461 form a disordered region. Residues P432–G448 show a composition bias toward low complexity.

Belongs to the WD repeat ESC family. As to expression, specifically expressed in kernel starting from 6 days after pollination.

The protein localises to the nucleus. Its function is as follows. Polycomb group (PcG) protein. PcG proteins act by forming multiprotein complexes, which are required to maintain the transcriptionally repressive state of homeotic genes throughout development. PcG proteins are not required to initiate repression, but to maintain it during later stages of development. They probably act via the methylation of histones, rendering chromatin heritably changed in its expressibility. This is Polycomb group protein FIE1 (FIE1) from Zea mays (Maize).